A 239-amino-acid chain; its full sequence is Ribose-5-phosphate isomerase A (239 aa).

Residues 39-42 (SGST), 95-98 (DGAD), and 108-111 (KGGG) each bind substrate. The active-site Proton acceptor is the glutamate 117. Residue lysine 135 coordinates substrate.

The protein belongs to the ribose 5-phosphate isomerase family. In terms of assembly, homodimer.

It catalyses the reaction aldehydo-D-ribose 5-phosphate = D-ribulose 5-phosphate. Its pathway is carbohydrate degradation; pentose phosphate pathway; D-ribose 5-phosphate from D-ribulose 5-phosphate (non-oxidative stage): step 1/1. Functionally, catalyzes the reversible conversion of ribose-5-phosphate to ribulose 5-phosphate. The polypeptide is Ribose-5-phosphate isomerase A (Chlamydia muridarum (strain MoPn / Nigg)).